The chain runs to 136 residues: ATP synthase F(0) complex subunit C1, mitochondrial (136 aa).

The transit peptide at 1 to 61 (MQTTGALLIS…REFQTSVVSR (61 aa)) directs the protein to the mitochondrion. The helical transmembrane segment at 77-97 (VGVAGSGAGIGTVFGSLIIGY) threads the bilayer. An N6,N6,N6-trimethyllysine modification is found at lysine 104. A helical membrane pass occupies residues 112–132 (ILGFALSEAMGLFCLMVAFLI).

This sequence belongs to the ATPase C chain family. Homooctamer; the c-ring consists of eight c subunits forming a circle, and each subunit adopts a hairpin shape. Component of the ATP synthase complex composed at least of ATP5F1A/subunit alpha, ATP5F1B/subunit beta, ATP5MC1/subunit c (homooctomer), MT-ATP6/subunit a, MT-ATP8/subunit 8, ATP5ME/subunit e, ATP5MF/subunit f, ATP5MG/subunit g, ATP5MK/subunit k, ATP5MJ/subunit j, ATP5F1C/subunit gamma, ATP5F1D/subunit delta, ATP5F1E/subunit epsilon, ATP5PF/subunit F6, ATP5PB/subunit b, ATP5PD/subunit d, ATP5PO/subunit OSCP. ATP synthase complex consists of a soluble F(1) head domain (subunits alpha(3) and beta(3)) - the catalytic core - and a membrane F(0) domain - the membrane proton channel (subunits c, a, 8, e, f, g, k and j). These two domains are linked by a central stalk (subunits gamma, delta, and epsilon) rotating inside the F1 region and a stationary peripheral stalk (subunits F6, b, d, and OSCP). Interacts with TMEM70 (homooligomer form); this interaction facilitates the oligomer formation of subunit c/ATP5MC1 (c-ring) and the c-ring membrane insertion and also protects ATP5MC1 against intramitochondrial proteolysis. In terms of processing, trimethylated by ATPSCKMT at Lys-104. Methylation is required for proper incorporation of the C subunit into the ATP synthase complex and mitochondrial respiration.

The protein resides in the mitochondrion membrane. It carries out the reaction H(+)(in) = H(+)(out). Subunit c, of the mitochondrial membrane ATP synthase complex (F(1)F(0) ATP synthase or Complex V) that produces ATP from ADP in the presence of a proton gradient across the membrane which is generated by electron transport complexes of the respiratory chain. ATP synthase complex consist of a soluble F(1) head domain - the catalytic core - and a membrane F(1) domain - the membrane proton channel. These two domains are linked by a central stalk rotating inside the F(1) region and a stationary peripheral stalk. During catalysis, ATP synthesis in the catalytic domain of F(1) is coupled via a rotary mechanism of the central stalk subunits to proton translocation. With the subunit a (MT-ATP6), forms the proton-conducting channel in the F(0) domain, that contains two crucial half-channels (inlet and outlet) that facilitate proton movement from the mitochondrial intermembrane space (IMS) into the matrix. Protons are taken up via the inlet half-channel and released through the outlet half-channel, following a Grotthuss mechanism. In Bos taurus (Bovine), this protein is ATP synthase F(0) complex subunit C1, mitochondrial.